A 439-amino-acid chain; its full sequence is Tol-Pal system protein TolB (439 aa).

Positions 1-22 are cleaved as a signal peptide; the sequence is MTKFPRWLAILVGLLFPLSALT.

The protein belongs to the TolB family. As to quaternary structure, the Tol-Pal system is composed of five core proteins: the inner membrane proteins TolA, TolQ and TolR, the periplasmic protein TolB and the outer membrane protein Pal. They form a network linking the inner and outer membranes and the peptidoglycan layer.

Its subcellular location is the periplasm. Its function is as follows. Part of the Tol-Pal system, which plays a role in outer membrane invagination during cell division and is important for maintaining outer membrane integrity. The chain is Tol-Pal system protein TolB from Xylella fastidiosa (strain M12).